Reading from the N-terminus, the 446-residue chain is Tubulin beta-4 chain (446 aa).

Residues Gln11, Glu69, Ser138, Gly142, Thr143, Gly144, Asn204, and Asn226 each contribute to the GTP site. Glu69 contributes to the Mg(2+) binding site. Over residues 417–426 (DLVSEYQQYQ) the composition is skewed to polar residues. Residues 417–446 (DLVSEYQQYQDATADEEGDYEDEDEALHDE) form a disordered region. Positions 429 to 446 (TADEEGDYEDEDEALHDE) are enriched in acidic residues.

Belongs to the tubulin family. In terms of assembly, dimer of alpha and beta chains. A typical microtubule is a hollow water-filled tube with an outer diameter of 25 nm and an inner diameter of 15 nM. Alpha-beta heterodimers associate head-to-tail to form protofilaments running lengthwise along the microtubule wall with the beta-tubulin subunit facing the microtubule plus end conferring a structural polarity. Microtubules usually have 13 protofilaments but different protofilament numbers can be found in some organisms and specialized cells. Mg(2+) is required as a cofactor.

The protein localises to the cytoplasm. The protein resides in the cytoskeleton. Its function is as follows. Tubulin is the major constituent of microtubules, a cylinder consisting of laterally associated linear protofilaments composed of alpha- and beta-tubulin heterodimers. Microtubules grow by the addition of GTP-tubulin dimers to the microtubule end, where a stabilizing cap forms. Below the cap, tubulin dimers are in GDP-bound state, owing to GTPase activity of alpha-tubulin. This Eleusine indica (Goosegrass) protein is Tubulin beta-4 chain (TUBB4).